We begin with the raw amino-acid sequence, 139 residues long: Nucleoside diphosphate kinase (139 aa).

Positions 11, 59, 87, 93, 104, and 114 each coordinate ATP. The active-site Pros-phosphohistidine intermediate is the histidine 117.

This sequence belongs to the NDK family. In terms of assembly, homotetramer. It depends on Mg(2+) as a cofactor.

It is found in the cytoplasm. It carries out the reaction a 2'-deoxyribonucleoside 5'-diphosphate + ATP = a 2'-deoxyribonucleoside 5'-triphosphate + ADP. It catalyses the reaction a ribonucleoside 5'-diphosphate + ATP = a ribonucleoside 5'-triphosphate + ADP. Major role in the synthesis of nucleoside triphosphates other than ATP. The ATP gamma phosphate is transferred to the NDP beta phosphate via a ping-pong mechanism, using a phosphorylated active-site intermediate. The polypeptide is Nucleoside diphosphate kinase (Coxiella burnetii (strain CbuK_Q154) (Coxiella burnetii (strain Q154))).